Consider the following 310-residue polypeptide: Epoxyqueuosine reductase (310 aa).

Asp133 functions as the Proton donor in the catalytic mechanism. In terms of domain architecture, 4Fe-4S ferredoxin-type spans 179–208; the sequence is YDNPSDKDYCGTCTRCVDACPTDAILQDNL. Cys188, Cys191, Cys194, Cys198, Cys214, Cys241, Cys244, and Cys248 together coordinate [4Fe-4S] cluster.

Belongs to the QueG family. In terms of assembly, monomer. It depends on cob(II)alamin as a cofactor. [4Fe-4S] cluster is required as a cofactor.

Its subcellular location is the cytoplasm. It catalyses the reaction epoxyqueuosine(34) in tRNA + AH2 = queuosine(34) in tRNA + A + H2O. Its pathway is tRNA modification; tRNA-queuosine biosynthesis. In terms of biological role, catalyzes the conversion of epoxyqueuosine (oQ) to queuosine (Q), which is a hypermodified base found in the wobble positions of tRNA(Asp), tRNA(Asn), tRNA(His) and tRNA(Tyr). This is Epoxyqueuosine reductase from Cyclobacterium marinum (strain ATCC 25205 / DSM 745 / LMG 13164 / NCIMB 1802) (Flectobacillus marinus).